A 62-amino-acid chain; its full sequence is Mu-conotoxin Lt5d (62 aa).

The first 22 residues, 1–22 (MRCLPVFIILLLLIPSAPSVDA), serve as a signal peptide directing secretion. The propeptide occupies 23-48 (QPTTKDDVPLASLHDNAKRALQMFWN).

The protein belongs to the conotoxin T superfamily. In terms of processing, contains 2 disulfide bonds that can be either 'C1-C3, C2-C4' or 'C1-C4, C2-C3', since these disulfide connectivities have been observed for conotoxins with cysteine framework V (for examples, see AC P0DQQ7 and AC P81755). In terms of tissue distribution, expressed by the venom duct.

The protein resides in the secreted. Its function is as follows. Mu-conotoxins block voltage-gated sodium channels (Nav). This toxin inhibits tetrodotoxin(TTX)-sensitive sodium channels, but does not affect TTX-resistant sodium channels. Reduces the amplitude of currents without changing the activation and inactivation kinetics of currents. The polypeptide is Mu-conotoxin Lt5d (Conus litteratus (Lettered cone)).